The chain runs to 272 residues: Tryptophan synthase alpha chain (272 aa).

Active-site proton acceptor residues include E49 and E60.

The protein belongs to the TrpA family. As to quaternary structure, tetramer of two alpha and two beta chains.

It catalyses the reaction (1S,2R)-1-C-(indol-3-yl)glycerol 3-phosphate + L-serine = D-glyceraldehyde 3-phosphate + L-tryptophan + H2O. It participates in amino-acid biosynthesis; L-tryptophan biosynthesis; L-tryptophan from chorismate: step 5/5. Its function is as follows. The alpha subunit is responsible for the aldol cleavage of indoleglycerol phosphate to indole and glyceraldehyde 3-phosphate. This chain is Tryptophan synthase alpha chain, found in Legionella pneumophila (strain Corby).